Reading from the N-terminus, the 224-residue chain is Cytidylate kinase (224 aa).

11-19 (GPAAAGKST) lines the ATP pocket.

The protein belongs to the cytidylate kinase family. Type 1 subfamily.

Its subcellular location is the cytoplasm. It catalyses the reaction CMP + ATP = CDP + ADP. The enzyme catalyses dCMP + ATP = dCDP + ADP. The sequence is that of Cytidylate kinase from Listeria monocytogenes serotype 4a (strain HCC23).